Reading from the N-terminus, the 880-residue chain is Tyrosine-protein kinase receptor TYRO3 (880 aa).

The signal sequence occupies residues 1–28; that stretch reads MVYPGPPGLIAGLLLAALSLSCVDGAKA. Ig-like C2-type domains lie at 29–114 and 125–206; these read LGFV…KSVS and PYFT…AIVE. The Extracellular segment spans residues 29-414; sequence LGFVGHGYNL…QRHPHTRMSW (386 aa). N37 and N49 each carry an N-linked (GlcNAc...) asparagine glycan. An intrachain disulfide couples C50 to C103. A glycan (N-linked (GlcNAc...) asparagine) is linked at N143. C146 and C189 are oxidised to a cystine. 2 consecutive Fibronectin type-III domains span residues 213 to 306 and 311 to 401; these read PPFN…TKET and LPQN…SKEE. N-linked (GlcNAc...) asparagine glycosylation is found at N216, N279, N351, and N365. The chain crosses the membrane as a helical span at residues 415–435; it reads VPMVLGILTALVTVVAMTLIF. Residues 436–880 are Cytoplasmic-facing; it reads LRKGRKETRF…MQEEQVVITL (445 aa). The Protein kinase domain maps to 503–774; the sequence is FTLGRTLGKG…VDLKQRLEAI (272 aa). Residues 509-517 and K535 each bind ATP; that span reads LGKGEFGSV. D640 serves as the catalytic Proton acceptor. Residue Y671 is modified to Phosphotyrosine; by autocatalysis. Positions 846–880 are disordered; sequence EWSSSAQNGEARGLLHEEEEEEEEEMQEEQVVITL. Over residues 862–873 the composition is skewed to acidic residues; that stretch reads EEEEEEEEEMQE.

Belongs to the protein kinase superfamily. Tyr protein kinase family. AXL/UFO subfamily. In terms of processing, tyrosine phosphorylated upon receptor stimulation. As to expression, detected in brain, spinal cord, intestine, lung, stomach, ovary, testis, skin and eye.

It localises to the cell membrane. It catalyses the reaction L-tyrosyl-[protein] + ATP = O-phospho-L-tyrosyl-[protein] + ADP + H(+). Functionally, may be involved in cell adhesion processes, particularly in the central nervous system. In Xenopus laevis (African clawed frog), this protein is Tyrosine-protein kinase receptor TYRO3 (tyro3).